Reading from the N-terminus, the 359-residue chain is Dual-specificity RNA methyltransferase RlmN (359 aa).

Glutamate 86 functions as the Proton acceptor in the catalytic mechanism. One can recognise a Radical SAM core domain in the interval 105-338; it reads EGEKYTICVS…CTIRESKGID (234 aa). An intrachain disulfide couples cysteine 112 to cysteine 343. 3 residues coordinate [4Fe-4S] cluster: cysteine 119, cysteine 123, and cysteine 126. S-adenosyl-L-methionine is bound by residues 169–170, serine 201, 224–226, and asparagine 300; these read GE and SLH. The S-methylcysteine intermediate role is filled by cysteine 343.

It belongs to the radical SAM superfamily. RlmN family. It depends on [4Fe-4S] cluster as a cofactor.

The protein resides in the cytoplasm. It carries out the reaction adenosine(2503) in 23S rRNA + 2 reduced [2Fe-2S]-[ferredoxin] + 2 S-adenosyl-L-methionine = 2-methyladenosine(2503) in 23S rRNA + 5'-deoxyadenosine + L-methionine + 2 oxidized [2Fe-2S]-[ferredoxin] + S-adenosyl-L-homocysteine. The enzyme catalyses adenosine(37) in tRNA + 2 reduced [2Fe-2S]-[ferredoxin] + 2 S-adenosyl-L-methionine = 2-methyladenosine(37) in tRNA + 5'-deoxyadenosine + L-methionine + 2 oxidized [2Fe-2S]-[ferredoxin] + S-adenosyl-L-homocysteine. In terms of biological role, specifically methylates position 2 of adenine 2503 in 23S rRNA and position 2 of adenine 37 in tRNAs. m2A2503 modification seems to play a crucial role in the proofreading step occurring at the peptidyl transferase center and thus would serve to optimize ribosomal fidelity. This is Dual-specificity RNA methyltransferase RlmN from Wolinella succinogenes (strain ATCC 29543 / DSM 1740 / CCUG 13145 / JCM 31913 / LMG 7466 / NCTC 11488 / FDC 602W) (Vibrio succinogenes).